The chain runs to 156 residues: Small ribosomal subunit protein uS7 (156 aa).

This sequence belongs to the universal ribosomal protein uS7 family. Part of the 30S ribosomal subunit. Contacts proteins S9 and S11.

One of the primary rRNA binding proteins, it binds directly to 16S rRNA where it nucleates assembly of the head domain of the 30S subunit. Is located at the subunit interface close to the decoding center, probably blocks exit of the E-site tRNA. This Thermomicrobium roseum (strain ATCC 27502 / DSM 5159 / P-2) protein is Small ribosomal subunit protein uS7.